A 504-amino-acid chain; its full sequence is L-amino-acid oxidase (504 aa).

The N-terminal stretch at 1–18 (MNVFFMFSLLFLAALGSC) is a signal peptide. Cys28 and Cys191 are disulfide-bonded. Residues 61 to 62 (MS), 81 to 82 (EA), Arg89, and 105 to 108 (GPMR) contribute to the FAD site. Arg108 serves as a coordination point for substrate. N-linked (GlcNAc...) asparagine glycosylation occurs at Asn190. His241 contacts substrate. Val279 provides a ligand contact to FAD. A disulfide bridge links Cys349 with Cys430. A glycan (N-linked (GlcNAc...) asparagine) is linked at Asn379. Tyr390 provides a ligand contact to substrate. FAD contacts are provided by residues Glu475 and 482–487 (GWIDST). 482–483 (GW) is a substrate binding site.

The protein belongs to the flavin monoamine oxidase family. FIG1 subfamily. In terms of assembly, homodimer; non-covalently linked. Requires FAD as cofactor. In terms of tissue distribution, expressed by the venom gland.

The protein resides in the secreted. The catalysed reaction is an L-alpha-amino acid + O2 + H2O = a 2-oxocarboxylate + H2O2 + NH4(+). It carries out the reaction L-leucine + O2 + H2O = 4-methyl-2-oxopentanoate + H2O2 + NH4(+). In terms of biological role, catalyzes an oxidative deamination of predominantly hydrophobic and aromatic L-amino acids, thus producing hydrogen peroxide that may contribute to the diverse toxic effects of this enzyme. Shows activity on L-Leu. Exhibits diverse biological activities, such as apoptosis, and inhibition of agonist- and shear stress-induced platelet aggregation (SIPA). Effects of snake L-amino oxidases on platelets are controversial, since they either induce aggregation or inhibit agonist-induced aggregation. These different effects are probably due to different experimental conditions. This protein may also induce hemorrhage, hemolysis, edema, antibacterial and antiparasitic activities. The sequence is that of L-amino-acid oxidase from Gloydius blomhoffii (Mamushi).